We begin with the raw amino-acid sequence, 224 residues long: PKHD-type hydroxylase Sbal_3634 (224 aa).

The Fe2OG dioxygenase domain occupies 78-176 (QFYPPLFNRY…RTAAFMWLQS (99 aa)). Fe cation is bound by residues H96, D98, and H157. R167 contacts 2-oxoglutarate.

The cofactor is Fe(2+). It depends on L-ascorbate as a cofactor.

This is PKHD-type hydroxylase Sbal_3634 from Shewanella baltica (strain OS155 / ATCC BAA-1091).